We begin with the raw amino-acid sequence, 299 residues long: GTPase Era (299 aa).

The Era-type G domain occupies 5–172 (KSGFVSIIGR…IDVLKSFLPE (168 aa)). Residues 13–20 (GRPNVGKS) are G1. 13 to 20 (GRPNVGKS) provides a ligand contact to GTP. Residues 39–43 (QTTRN) are G2. Residues 60–63 (DTPG) form a G3 region. GTP-binding positions include 60–64 (DTPGI) and 122–125 (NKID). The G4 stretch occupies residues 122–125 (NKID). The interval 151-153 (ISA) is G5. The 78-residue stretch at 203 to 280 (TSEEIPHAIG…YLELWVKVQR (78 aa)) folds into the KH type-2 domain.

Belongs to the TRAFAC class TrmE-Era-EngA-EngB-Septin-like GTPase superfamily. Era GTPase family. Monomer.

The protein resides in the cytoplasm. It is found in the cell membrane. Functionally, an essential GTPase that binds both GDP and GTP, with rapid nucleotide exchange. Plays a role in 16S rRNA processing and 30S ribosomal subunit biogenesis and possibly also in cell cycle regulation and energy metabolism. The polypeptide is GTPase Era (Staphylococcus epidermidis (strain ATCC 35984 / DSM 28319 / BCRC 17069 / CCUG 31568 / BM 3577 / RP62A)).